Reading from the N-terminus, the 186-residue chain is Adenylate kinase (186 aa).

An ATP-binding site is contributed by 11–16 (GAGKGT). Positions 31 to 60 (STGDILRAAVKNGTAMGIEAKKYMDAGDLV) are NMP. AMP-binding positions include Thr32, Arg37, 58 to 60 (DLV), 86 to 89 (GFPR), and Gln93. Positions 127-137 (GRAIKEGRSDD) are LID. Arg128 provides a ligand contact to ATP. The AMP site is built by Arg134 and Arg145. Gly173 contacts ATP.

Belongs to the adenylate kinase family. In terms of assembly, monomer.

Its subcellular location is the cytoplasm. The catalysed reaction is AMP + ATP = 2 ADP. The protein operates within purine metabolism; AMP biosynthesis via salvage pathway; AMP from ADP: step 1/1. In terms of biological role, catalyzes the reversible transfer of the terminal phosphate group between ATP and AMP. Plays an important role in cellular energy homeostasis and in adenine nucleotide metabolism. The polypeptide is Adenylate kinase (Leptospira biflexa serovar Patoc (strain Patoc 1 / Ames)).